The primary structure comprises 274 residues: Nitrogenase iron protein (274 aa).

8-15 (GKGGIGKS) lines the ATP pocket. [4Fe-4S] cluster is bound at residue Cys94. Arg97 carries the ADP-ribosylarginine; by dinitrogenase reductase ADP-ribosyltransferase modification. A [4Fe-4S] cluster-binding site is contributed by Cys129.

This sequence belongs to the NifH/BchL/ChlL family. As to quaternary structure, homodimer. It depends on [4Fe-4S] cluster as a cofactor. In terms of processing, the reversible ADP-ribosylation of Arg-97 inactivates the nitrogenase reductase and regulates nitrogenase activity.

The catalysed reaction is N2 + 8 reduced [2Fe-2S]-[ferredoxin] + 16 ATP + 16 H2O = H2 + 8 oxidized [2Fe-2S]-[ferredoxin] + 2 NH4(+) + 16 ADP + 16 phosphate + 6 H(+). The key enzymatic reactions in nitrogen fixation are catalyzed by the nitrogenase complex, which has 2 components: the iron protein and the molybdenum-iron protein. In Methanocella arvoryzae (strain DSM 22066 / NBRC 105507 / MRE50), this protein is Nitrogenase iron protein.